The sequence spans 511 residues: MSSHIQIFDTTLRDGEQTPGVNFSFDERLKIAKQLEKWGVDIIEAGFPASSSGSFKSVEAIAKTLTTTAVCGLARCVKKDIDAVYESTKAAAKPRIHVFIATSPIHRDSKLMMSKEEVLASIKEHVSYAKQYFDVVQFSPEDATRTELPFLIECVQTAVDAGASVINIPDTVGFSYPKEYGEIFKTLQESVHADHDVIYSAHCHDDLGLAVANSMAAIENGAKRIEGTLNGIGERAGNTALEEVALGLYVRQDHYDNQTQINLEETKQTSDLIARFAGIRVPRNKAIVGQNAFSHESGIHQDGVLKNPETYEIMTPQLVGVKTTELPLGKLSGKHAFAEKLTALGYDVDPEEQKTLFKQFKTVADKKKAVTDRDIHALIQGTEHEQNAIYKVETLQLQFVSNGLQSAVVVIKDIDGNTYQDSSIGTGSIVSVYNAVDRIFDRKTELIEYRIDSVTEGTDAQAEVHVQIKIDDQIVTGVGIDHDILLASCKSYVEAHAKYVANTKVEEGIHS.

Positions 5-267 (IQIFDTTLRD…QTQINLEETK (263 aa)) constitute a Pyruvate carboxyltransferase domain. 4 residues coordinate Mn(2+): aspartate 14, histidine 202, histidine 204, and asparagine 238. Residues 391 to 511 (KVETLQLQFV…NTKVEEGIHS (121 aa)) are regulatory domain.

It belongs to the alpha-IPM synthase/homocitrate synthase family. LeuA type 1 subfamily. In terms of assembly, homodimer. Mn(2+) serves as cofactor.

It localises to the cytoplasm. It catalyses the reaction 3-methyl-2-oxobutanoate + acetyl-CoA + H2O = (2S)-2-isopropylmalate + CoA + H(+). Its pathway is amino-acid biosynthesis; L-leucine biosynthesis; L-leucine from 3-methyl-2-oxobutanoate: step 1/4. Catalyzes the condensation of the acetyl group of acetyl-CoA with 3-methyl-2-oxobutanoate (2-ketoisovalerate) to form 3-carboxy-3-hydroxy-4-methylpentanoate (2-isopropylmalate). The sequence is that of 2-isopropylmalate synthase from Staphylococcus saprophyticus subsp. saprophyticus (strain ATCC 15305 / DSM 20229 / NCIMB 8711 / NCTC 7292 / S-41).